The following is a 1318-amino-acid chain: MDFRITEGSSPTSLSVSEKIAKLESCNDSRITCRPVRESKPTYTSGQKHSALLSKLKRSKVTTDFCKLEESKGIICQENLHTEGAKSKTENISGEDKSSQRRTRLKQIQEFISHRRSFLNSNANSVESEKILAENNHMFNVKSKLSNKESFIKTRRPRTNGELSDLSLQPKRIFSEPVNSHPSQSMFGNGVRASSGSYSLKRDLKDYEEELPSSKKRQRTPPPIVVTNFPQEIFPSKKISLSAKRRIQGKYSGENVRARIELARERNRKRDYVSNLSKGHTTNALEENPFNLGPNYRASTRKCNRIKEAINLFAAKNGSMEVPPKVSVGDSVLTTSQKFLQVIREKTALLMNQDSNSVQPQALAAAESPTTKAPTTKAPTSEAPPKGHVKQLAKQLGNIYMPQSINNVEPTSHSSISKVVNPSEKVISKIERACLAGNGNVHPSIKMEKNLELNPHPRTLNATEHKINSRIQVSKLNTKNELANADPKMYLLENLSDRLYFCKLAKLLLRKYPLDIAEHQFALVYSRFQRIPLKQISCLKQSLVAYYSVLSEVGITNEIMLRENRFSSPKTPEGLVSISKLLLDDREHLSHDERSYIQQLQSQIKSQSVHHENAAEEIRKMRNLRNSRINSQQVGEKVFVNPDVKTMDIQETFLQDYEDETFANEGLSASKFKEEFLLISDSKSDLNSEEIATPNSLEFKNNPRIKVPRSLLTILNLHDRSQLKLFEVCHNSEFKDPINLSNCLRNLLEKQLLSYNFTDWFASLGSEYENVYVKFISHYDFSSLNVYASFQKLCCDLYYGSDDYIHSPILQVFASCWLKQNSNYGFLNEDIIVKIVLILIDLHKSTYSKKLNSYVVPMETFVKYALEKLRPLISPDSVCILSKEDKKHWLKYKKNRSTFAKLLFSTWSNLPSDIGFILECMLKEYYDTFLKSPFAVPNAVQAQLHNQVRGDLTPKRNRSSLISELMKSSKLLKQESSGNKNSTSLESDAFKESSFVLNEENGGIYAGKEIDLPEPSVIDGRPHFSVFNYTHHMQEEKTHNRLPWHRRGMISYKKMVLSKNNRWVAGYWKKKYCIVDSGKLIFYKSDHLDPNACSNVSPIHREFGLQSCLASPNLPPSINSNRNNVFYLNIPGNECYLFEAPSVLAMNEWIHSLNFNAAMITCPPLPENITNTEYGWGYILTRAEKKAYYTAADGTKTFVGDLAQLTRWSPMDIQGLQDIPRPLRDKVHILRDCVPSLLETCLLFQSLPEKMEKCFAAGSKNYLKAMDNWNRKMKFLYERSMMYKEYQRVLECEYEYRKSHDFYPTLSPVRYPYDFKGL.

3 disordered regions span residues 177-198, 208-227, and 360-387; these read PVNS…SGSY, EEEL…IVVT, and PQAL…PPKG. The segment covering 364–384 has biased composition (low complexity); the sequence is AAAESPTTKAPTTKAPTSEAP. Residues 1049-1158 enclose the PH domain; that stretch reads MISYKKMVLS…WIHSLNFNAA (110 aa).

Its subcellular location is the nucleus. Functionally, appears to have a role in sporulation. The chain is Meiotically up-regulated gene 79 protein (mug79) from Schizosaccharomyces pombe (strain 972 / ATCC 24843) (Fission yeast).